A 101-amino-acid chain; its full sequence is Urease subunit beta (101 aa).

It belongs to the urease beta subunit family. Heterotrimer of UreA (gamma), UreB (beta) and UreC (alpha) subunits. Three heterotrimers associate to form the active enzyme.

It localises to the cytoplasm. It carries out the reaction urea + 2 H2O + H(+) = hydrogencarbonate + 2 NH4(+). It participates in nitrogen metabolism; urea degradation; CO(2) and NH(3) from urea (urease route): step 1/1. This Cupriavidus metallidurans (strain ATCC 43123 / DSM 2839 / NBRC 102507 / CH34) (Ralstonia metallidurans) protein is Urease subunit beta.